Consider the following 257-residue polypeptide: Thiazole synthase (257 aa).

Lys98 (schiff-base intermediate with DXP) is an active-site residue. Residues Gly159, 185-186 (AG), and 207-208 (NT) contribute to the 1-deoxy-D-xylulose 5-phosphate site.

Belongs to the ThiG family. As to quaternary structure, homotetramer. Forms heterodimers with either ThiH or ThiS.

It localises to the cytoplasm. It carries out the reaction [ThiS sulfur-carrier protein]-C-terminal-Gly-aminoethanethioate + 2-iminoacetate + 1-deoxy-D-xylulose 5-phosphate = [ThiS sulfur-carrier protein]-C-terminal Gly-Gly + 2-[(2R,5Z)-2-carboxy-4-methylthiazol-5(2H)-ylidene]ethyl phosphate + 2 H2O + H(+). Its pathway is cofactor biosynthesis; thiamine diphosphate biosynthesis. Functionally, catalyzes the rearrangement of 1-deoxy-D-xylulose 5-phosphate (DXP) to produce the thiazole phosphate moiety of thiamine. Sulfur is provided by the thiocarboxylate moiety of the carrier protein ThiS. In vitro, sulfur can be provided by H(2)S. This is Thiazole synthase from Anaeromyxobacter sp. (strain Fw109-5).